The sequence spans 475 residues: Glycogen synthase (475 aa).

Lysine 15 provides a ligand contact to ADP-alpha-D-glucose.

It belongs to the glycosyltransferase 1 family. Bacterial/plant glycogen synthase subfamily.

It catalyses the reaction [(1-&gt;4)-alpha-D-glucosyl](n) + ADP-alpha-D-glucose = [(1-&gt;4)-alpha-D-glucosyl](n+1) + ADP + H(+). Its pathway is glycan biosynthesis; glycogen biosynthesis. Functionally, synthesizes alpha-1,4-glucan chains using ADP-glucose. The chain is Glycogen synthase from Kosmotoga olearia (strain ATCC BAA-1733 / DSM 21960 / TBF 19.5.1).